An 821-amino-acid polypeptide reads, in one-letter code: MRGVFIVIVTCLVFLPDPLRAGVASIGSITPGFGGSQMNYINNDGIFLESNNSAFGFGFVTTQDSVTLFTLSIIHKSSTKLIWSANRASPVSNSDKFVFDDNGNVVMEGTEVWRLDNSGKNASRIELRDSGNLVVVSVDGTSIWESFDHPTDTLITNQAFKEGMKLTSSPSSSNMTYALEIKSGDMVLSVNSLTPQVYWSMANARERIINKDGGVVTSSSLLGNSWRFFDQKQVLLWQFVFSDNKDDNTTWIAVLGNNGVISFSNLGSGASAADSSTKIPSDLCGTPEPCGPYYVCSGSKVCGCVSGLSRARSDCKTGITSPCKKTKDNATLPLQLVSAGDGVDYFALGYAPPFSKKTDLDSCKEFCHNNCSCLGLFFQNSSGNCFLFDYIGSFKTSGNGGSGFVSYIKIASTGSGGGDNGEDDGKHFPYVVIIVVVTVFIIAVLIFVAFRIHKRKKMILEAPQESSEEDNFLENLSGMPIRFAYKDLQSATNNFSVKLGQGGFGSVYEGTLPDGSRLAVKKLEGIGQGKKEFRAEVSIIGSIHHLHLVRLRGFCAEGAHRLLAYEFLSKGSLERWIFRKKDGDVLLDWDTRFNIALGTAKGLAYLHEDCDARIVHCDIKPENILLDDNFNAKVSDFGLAKLMTREQSHVFTTMRGTRGYLAPEWITNYAISEKSDVYSYGMVLLELIGGRKNYDPSETSEKCHFPSFAFKKMEEGKLMDIVDGKMKNVDVTDERVQRAMKTALWCIQEDMQTRPSMSKVVQMLEGVFPVVQPPSSSTMGSRLYSSFFKSISEDGGATTSSGPSDCNSENYLSAVRLSGPR.

The signal sequence occupies residues 1–21; the sequence is MRGVFIVIVTCLVFLPDPLRA. Over 22–429 the chain is Extracellular; sequence GVASIGSITP…NGEDDGKHFP (408 aa). Positions 33 to 148 constitute a Bulb-type lectin domain; that stretch reads FGGSQMNYIN…DGTSIWESFD (116 aa). N-linked (GlcNAc...) asparagine glycans are attached at residues Asn51, Asn121, Asn174, and Asn248. The 35-residue stretch at 280-314 folds into the EGF-like; atypical domain; the sequence is PSDLCGTPEPCGPYYVCSGSKVCGCVSGLSRARSD. Cystine bridges form between Cys284/Cys296 and Cys290/Cys302. Residues 323 to 411 enclose the PAN domain; the sequence is CKKTKDNATL…SGFVSYIKIA (89 aa). 3 N-linked (GlcNAc...) asparagine glycosylation sites follow: Asn329, Asn370, and Asn380. Disulfide bonds link Cys363/Cys385 and Cys367/Cys373. A helical membrane pass occupies residues 430–450; sequence YVVIIVVVTVFIIAVLIFVAF. Residues 451–821 lie on the Cytoplasmic side of the membrane; that stretch reads RIHKRKKMIL…LSAVRLSGPR (371 aa). The Protein kinase domain occupies 493-768; the sequence is NNFSVKLGQG…KVVQMLEGVF (276 aa). Residues 499–507 and Lys521 each bind ATP; that span reads LGQGGFGSV. Positions 581-599 are caM-binding; the sequence is KDGDVLLDWDTRFNIALGT. The active-site Proton acceptor is the Asp618. Position 635 is a phosphoserine (Ser635). At Thr652 the chain carries Phosphothreonine.

Belongs to the protein kinase superfamily. Ser/Thr protein kinase family. In terms of assembly, interacts with PUB9, PUB13, PUB14 and PUB29.

Its subcellular location is the membrane. It carries out the reaction L-seryl-[protein] + ATP = O-phospho-L-seryl-[protein] + ADP + H(+). The enzyme catalyses L-threonyl-[protein] + ATP = O-phospho-L-threonyl-[protein] + ADP + H(+). The polypeptide is G-type lectin S-receptor-like serine/threonine-protein kinase SD2-5 (SD25) (Arabidopsis thaliana (Mouse-ear cress)).